A 1375-amino-acid polypeptide reads, in one-letter code: DNA-directed RNA polymerase subunit beta (1375 aa).

It belongs to the RNA polymerase beta chain family. As to quaternary structure, the RNAP catalytic core consists of 2 alpha, 1 beta, 1 beta' and 1 omega subunit. When a sigma factor is associated with the core the holoenzyme is formed, which can initiate transcription.

The catalysed reaction is RNA(n) + a ribonucleoside 5'-triphosphate = RNA(n+1) + diphosphate. Its function is as follows. DNA-dependent RNA polymerase catalyzes the transcription of DNA into RNA using the four ribonucleoside triphosphates as substrates. This is DNA-directed RNA polymerase subunit beta from Campylobacter jejuni subsp. jejuni serotype O:6 (strain 81116 / NCTC 11828).